Consider the following 296-residue polypeptide: uncharacterized protein (296 aa).

2 CBS domains span residues 176–232 and 236–292; these read GIKE…DKKV and MRRD…KFPE.

This is an uncharacterized protein from Methanocaldococcus jannaschii (strain ATCC 43067 / DSM 2661 / JAL-1 / JCM 10045 / NBRC 100440) (Methanococcus jannaschii).